A 364-amino-acid chain; its full sequence is UDP-N-acetylglucosamine--N-acetylmuramyl-(pentapeptide) pyrophosphoryl-undecaprenol N-acetylglucosamine transferase (364 aa).

UDP-N-acetyl-alpha-D-glucosamine contacts are provided by residues 10–12, Asn-128, Arg-170, Ser-199, Ile-250, and Gln-295; that span reads TGG.

The protein belongs to the glycosyltransferase 28 family. MurG subfamily.

The protein resides in the cell inner membrane. It carries out the reaction di-trans,octa-cis-undecaprenyl diphospho-N-acetyl-alpha-D-muramoyl-L-alanyl-D-glutamyl-meso-2,6-diaminopimeloyl-D-alanyl-D-alanine + UDP-N-acetyl-alpha-D-glucosamine = di-trans,octa-cis-undecaprenyl diphospho-[N-acetyl-alpha-D-glucosaminyl-(1-&gt;4)]-N-acetyl-alpha-D-muramoyl-L-alanyl-D-glutamyl-meso-2,6-diaminopimeloyl-D-alanyl-D-alanine + UDP + H(+). It functions in the pathway cell wall biogenesis; peptidoglycan biosynthesis. Cell wall formation. Catalyzes the transfer of a GlcNAc subunit on undecaprenyl-pyrophosphoryl-MurNAc-pentapeptide (lipid intermediate I) to form undecaprenyl-pyrophosphoryl-MurNAc-(pentapeptide)GlcNAc (lipid intermediate II). The protein is UDP-N-acetylglucosamine--N-acetylmuramyl-(pentapeptide) pyrophosphoryl-undecaprenol N-acetylglucosamine transferase of Chlorobaculum parvum (strain DSM 263 / NCIMB 8327) (Chlorobium vibrioforme subsp. thiosulfatophilum).